We begin with the raw amino-acid sequence, 143 residues long: Flagellar assembly factor FliW (143 aa).

It belongs to the FliW family. As to quaternary structure, interacts with translational regulator CsrA and flagellin(s).

The protein localises to the cytoplasm. In terms of biological role, acts as an anti-CsrA protein, binds CsrA and prevents it from repressing translation of its target genes, one of which is flagellin. Binds to flagellin and participates in the assembly of the flagellum. In Clostridium botulinum (strain 657 / Type Ba4), this protein is Flagellar assembly factor FliW.